Here is a 271-residue protein sequence, read N- to C-terminus: Ferric vulnibactin reductase VuuB (271 aa).

One can recognise an FAD-binding FR-type domain in the interval 8-131; sequence VYPMLLDFVR…IGPAGPDPLI (124 aa).

This sequence belongs to the SIP oxidoreductase family. Monomer. The cofactor is FAD.

It is found in the cytoplasm. The enzyme catalyses 2 a Fe(II)-siderophore + NAD(+) + H(+) = 2 a Fe(III)-siderophore + NADH. Functionally, ferric-siderophore reductase involved in iron removal from the siderophores after their transport into the cell. Acts as a major ferric-vulnibactin reductase catalyzing the reduction of Fe(3+)-vulnibactin, a catecholate siderophore synthesized by V.vulnificus. The polypeptide is Ferric vulnibactin reductase VuuB (Vibrio vulnificus (strain CMCP6)).